The primary structure comprises 86 residues: Large ribosomal subunit protein bL31B (86 aa).

The protein belongs to the bacterial ribosomal protein bL31 family. Type B subfamily. In terms of assembly, part of the 50S ribosomal subunit.

The chain is Large ribosomal subunit protein bL31B from Streptococcus equi subsp. zooepidemicus (strain H70).